We begin with the raw amino-acid sequence, 290 residues long: Shikimate dehydrogenase (NADP(+)) (290 aa).

Shikimate-binding positions include 24–26 and T71; that span reads SKS. The active-site Proton acceptor is K75. Residues N96 and D111 each contribute to the shikimate site. NADP(+) is bound by residues 135–139, 159–164, and I228; these read GAGGA and NRTKQR. A shikimate-binding site is contributed by Y230. G251 is a binding site for NADP(+).

The protein belongs to the shikimate dehydrogenase family. In terms of assembly, homodimer.

It carries out the reaction shikimate + NADP(+) = 3-dehydroshikimate + NADPH + H(+). Its pathway is metabolic intermediate biosynthesis; chorismate biosynthesis; chorismate from D-erythrose 4-phosphate and phosphoenolpyruvate: step 4/7. Functionally, involved in the biosynthesis of the chorismate, which leads to the biosynthesis of aromatic amino acids. Catalyzes the reversible NADPH linked reduction of 3-dehydroshikimate (DHSA) to yield shikimate (SA). The protein is Shikimate dehydrogenase (NADP(+)) of Bartonella tribocorum (strain CIP 105476 / IBS 506).